Here is a 246-residue protein sequence, read N- to C-terminus: Uridylate kinase (246 aa).

13-16 (KLSG) is a binding site for ATP. Glycine 54 lines the UMP pocket. Residues glycine 55 and arginine 59 each coordinate ATP. UMP contacts are provided by residues aspartate 74 and 135-142 (AGMPYFST). Positions 163, 169, and 172 each coordinate ATP.

This sequence belongs to the UMP kinase family. As to quaternary structure, homohexamer.

It localises to the cytoplasm. The enzyme catalyses UMP + ATP = UDP + ADP. It functions in the pathway pyrimidine metabolism; CTP biosynthesis via de novo pathway; UDP from UMP (UMPK route): step 1/1. Its activity is regulated as follows. Inhibited by UTP. Catalyzes the reversible phosphorylation of UMP to UDP. This is Uridylate kinase from Bifidobacterium longum (strain NCC 2705).